Reading from the N-terminus, the 239-residue chain is Beta-glucanase (239 aa).

The signal sequence occupies residues 1–25 (MKRVLLILVTGLFMSLCGITSSVSA). In terms of domain architecture, GH16 spans 26 to 239 (QTGGSFFEPF…HYDWMRYRKK (214 aa)). A disulfide bridge connects residues C57 and C86. The active-site Nucleophile is E134.

The protein belongs to the glycosyl hydrolase 16 family.

It carries out the reaction Hydrolysis of (1-&gt;4)-beta-D-glucosidic linkages in beta-D-glucans containing (1-&gt;3)- and (1-&gt;4)-bonds.. The chain is Beta-glucanase (bglA) from Bacillus amyloliquefaciens (Bacillus velezensis).